The following is a 447-amino-acid chain: Succinate--CoA ligase [ADP-forming] subunit beta, mitochondrial (447 aa).

The N-terminal 34 residues, 1-34 (MFKLGRNRALASAFAATSRAPLASRLPSVSQQQR), are a transit peptide targeting the mitochondrion. The ATP-grasp domain occupies 45 to 287 (ADLLRQYGIG…TTQEDPDEVR (243 aa)). ATP is bound by residues Lys-82, 89-91 (GRG), and Glu-150. Residues Asn-242 and Asp-256 each coordinate Mg(2+). Residues Asn-307 and 364–366 (GIV) each bind substrate.

The protein belongs to the succinate/malate CoA ligase beta subunit family. As to quaternary structure, heterodimer of an alpha and a beta subunit. Requires Mg(2+) as cofactor.

The protein localises to the mitochondrion. It carries out the reaction succinate + ATP + CoA = succinyl-CoA + ADP + phosphate. It participates in carbohydrate metabolism; tricarboxylic acid cycle; succinate from succinyl-CoA (ligase route): step 1/1. In terms of biological role, succinyl-CoA synthetase functions in the citric acid cycle (TCA), coupling the hydrolysis of succinyl-CoA to the synthesis of ATP and thus represents the only step of substrate-level phosphorylation in the TCA. The beta subunit provides nucleotide specificity of the enzyme and binds the substrate succinate, while the binding sites for coenzyme A and phosphate are found in the alpha subunit. This chain is Succinate--CoA ligase [ADP-forming] subunit beta, mitochondrial, found in Neurospora crassa (strain ATCC 24698 / 74-OR23-1A / CBS 708.71 / DSM 1257 / FGSC 987).